Reading from the N-terminus, the 145-residue chain is Transmembrane protein CCDC163 (145 aa).

The helical transmembrane segment at 38–54 threads the bilayer; the sequence is LIGLCICFFCSSGCIFL.

It localises to the membrane. The protein is Transmembrane protein CCDC163 of Homo sapiens (Human).